We begin with the raw amino-acid sequence, 487 residues long: MTELFIDGAWRDGAGPVFASRNPGTGEPVWEGAGASADDVERAVASARRAFAAWSALDLDARCAIVKRFAALLVERKEALATMIGRETGKPLWEARTEVASMAAKVDVSIAAYHERTGERRSPTADGVAVLRHRPHGVVAVFGPYNFPGHLPNGHIVPALIAGNTVVFKPSELAPGVARATVEIWRDAGLPAGVLNLVQGEKDTGVALANHRQIDGLFFTGSSDTGTLLHRQFGGRPEIVLALEMGGNNPLVVADVEDIDAAVHHAIQSAFLSAGQRCTCARRILVPRGAFGDRFLERFADVASRITADVYDADPQPFMGAVISARAASRLVAAQAKLLELGAAPIIEMRQRDPALGFVNASILDVTPVRELPDEEHFGPLAQIVRYTDLDDAIARANDTAFGLSAGLLADDETVWNTFRRTIRAGIVNWNRPTNGASSAAPFGGAGRSGNHRPSAYYAADYCAYPMASVESAQLQMPANLSPGLHF.

G221–G226 is a binding site for NAD(+). Active-site residues include E244 and C278.

Belongs to the aldehyde dehydrogenase family. AstD subfamily.

The catalysed reaction is N-succinyl-L-glutamate 5-semialdehyde + NAD(+) + H2O = N-succinyl-L-glutamate + NADH + 2 H(+). Its pathway is amino-acid degradation; L-arginine degradation via AST pathway; L-glutamate and succinate from L-arginine: step 4/5. Catalyzes the NAD-dependent reduction of succinylglutamate semialdehyde into succinylglutamate. This Burkholderia mallei (strain ATCC 23344) protein is N-succinylglutamate 5-semialdehyde dehydrogenase.